The sequence spans 2876 residues: MNGDMPHVPITTLAGIASLTDLLNQLPLPSPLPATTTKSLLYNGRIAEEVSCLLSRRDDALVSQLAHSLNQVSTEHIELKDNLGSDDPEGDVPLLLQTVLSRNPNVFREKSLMQQPMIPSYKMPQNSMHGSPASNYQQTTITPSPPSRYVQTQAGSGSRYMPQQNSPVPSPYAPQSPAGYMQYSHPPSYPQHQPIQQVSVSSPIVPSGMRNIHDNKVSGQVSGNSNHNARHCSSDEYINIVQRLGNDEGDPAMRNTSFPVRSACSPAGSEGTPKVGPRPPLILQSPPPYTSPSDTAPDLLLDSPERKKKQKRLLKEEGGKGAMYGIVSSPSKDSTKLTIKLSRVKSSETEQSAEPVVPVVDHGSDAENEVSCNSLSYHRNPQERLSAGQCLSGEQSAYQQVPVLQNIGALAAKQPGVVSGTPYDEAELDALAEIERIERESAIERERCSKEVQDKDKPLKKRKQDSYPQEPGAAGTAGASGTPGVGGGCNAGNKLVPQEACAASNGSSRPALMVSIDLQQAGRVEGPVDSCPVPATEAQRWTEDGSESTGVLRLKSKTDGEVQRTVDGRPEVIKQRVETTPQKTAVDGRPETPINKHENRREISNKVSSEKRSDLSKHRHDGKAEKIRAEGKGHETSRKHEGRSELSRDCKEERHREKDSDSSKGRRSDTSKSSRVEHNRDKEQEQEKVGDKGLEKGREKELEKGRDKERVKDQEKDQEKGRDKEVEKGRYKERVKDRVKEQEKVRDKEQVKGRDKKRSKDLEKCREKDQDKELEKDREKNQDKELEKGREKDQDKELEKGREKDRDKEMEKAREKDQDKELEKGREKDQDKELEKGQEKDRDKVREKDRDKVRDKDRDKVREKDRDKVREKDRDKLREKDREKIRERDRDKGREKDRDKEQVKTREKDQEKERLKDRDKEREKVRDKGRDRDRDQEKKRNKELTEDKQAPEQRSRPNSPRVKQEPRNGEESKIKPERSVHKNSNNKDEKRGGENKNQLDGHKPQSIDSKTADFPNYLLGGKSSALKNFVIPKLKRDKEGNVMQEVRIELFSEPRVKLEKLDLVEDLNKGAKPVVVLKKLSIDEVQKMISNSRSSKSSRSSHGRFRETDSRLPLCERVKMNKRRRSSTNEKPKYAEVSSDDDSSSSVEIAPKRSKKDRDKTWEYEEKDRRGSGDHRRSFDSRRSSGGRHRERSPEDSDEDSPPPSLSDLARKLKKKEKQKKRKAYEPKLTVDEMMDSSTFKRFTTSVDNILDNLEDVDLTSLDDDEIPQELLLGKHQLSELSSESAKIKAMGIMHKITHDKMVKVQSILEKNIQDGAKLSTLMNHDNDRDDEERLWRDLIMERVTKSADACLTALNIMTSARMPKAVYIEDVIERVVQYTKFHLQNTLYPQYDPVYRVDHHGGGTLSSKAKRAKCSTHKQRVTVMLYNKVCDIISNLSELLEIQLLTDTTILQISSLGITPFFVENVSELQLCAIKLVTAVFSRYEKHRQLILEEIFTSLARLPTSKRNLRNYRLNSSDVDGEPMYIQMVTALVLQLIQCVVNLPSDKDSDEENDRKVDHDVLITNSYETAMRTAQNFLSVFLKKCGSKQGEDDYRPLFENFVQDLLSTVNKPDWPAAELLLSLLGRLLVHQFSNKQTEMALRVASLDYLGTVAARLRKDAVTSKMDQRSINRILGENSGSDEIQQLQKALLNYLDENVETDPFLLFARKFYLAQWYRDTSTETEKAMKSQRDDDSSDGPHHAKDVETTSEILQKAEARKKFLRSVIKTTASKFSSLRVNSDTVDYEDSCLIVRYLASMRPFAQSFDIYLTQILRVLGESAIAVRTKAMKCLSEVVAVDPSILARLDMQRGVHGRLMDNSTSVREAAVELLGRFVLSRPQLTEQYYDMLIERILDTGISVRKRVIKILRDICLEQPTFNKVTEMCVKMIRRVNDEEGIKKLVNETFQKLWFTPTPNHDKEAMTRKILNITDVVAACRDSGYDWFEQLLQNLLKSEEDASYKPARKACAQLVDSLVEHILKYEESLADCENKGLTSNRLVACITTLYLFSKIRPHLMVKHAMTMQPYLTTKCNTQSDFMVICNVAKILELVVPLMDHPSESFLTTIEEDLMKLIIKYGMTVVQHCVSCLGAVVNRVTHNYKFVWSCFNRYYGALSKLKMQHQEDPNSTVLVSNKPALLRSLFTVGALCRHFDFDQEEFKGSNKVVIKDKVLELLLYFTKNDDEEVQTKAIIGLGFLFIQDPGLMFVTEVKNLYNTLLADRKTSVNLKIQVLKNLQTYLQEEDSRMQEADREWNKLSKKEDLKEMGDISSGMSSSIMQLYLKQVLEAFFHTQSSVRHYALNVIALTLNQGLIHPVQCVPYLIAMGTDSEPTMRNKADQQLVEIDKKYTGFIHMKAVAGMKMSYQVQQAIVGSKDTVIRGFRLDESSTALCSHLYTMVRGNRQHRRAFLISLLNLFDDNTKSDVNMLLYIADNLASFPYQTQEEPMFIMHHVDITLSVSGSNLLQSFKESLLKEPRKVEVVKKKKKKKKKKKQKQKRGKKYGSEEEDESSRSSSSSSSSSSSSSDSDSSEEEVIHRRKKPRRTTANSDSDSDLDVEDVDKVMLRLPDNPEPLLDFANASQGILLLLMLKQHLKNLYGFSDSKIQKYSPTESAKIYDKAVNRKANVHFNPRQTLDYLTNSLSNSDLSNDVKRRVVRQYLDFKVLMEHLDPDEEEEEGEASASSHARNKAINALLGGSSPKNNAAESYDDDSEVEEKTPGSSRRSRRTGDSAEASGHRNETVEATDVIALCCPKYKDRPQIARVIQKTSKGYSIHWMAGSYSGTWAEAKKRDGRKLVPWVDTIKESDIIYKKIALTSAHKLSNKVVQTLRSLYAAKEGSSS.

Polar residues-rich tracts occupy residues 124 to 142 and 149 to 167; these read PQNS…TTIT and YVQT…QNSP. Disordered stretches follow at residues 124–197, 246–367, 439–494, and 525–1017; these read PQNS…PIQQ, NDEG…SDAE, RESA…AGNK, and EGPV…FPNY. The segment covering 276 to 290 has biased composition (pro residues); the sequence is GPRPPLILQSPPPYT. Residues 439-457 are compositionally biased toward basic and acidic residues; the sequence is RESAIERERCSKEVQDKDK. Positions 471–480 are enriched in low complexity; the sequence is PGAAGTAGAS. Positions 481-490 are enriched in gly residues; that stretch reads GTPGVGGGCN. Composition is skewed to basic and acidic residues over residues 556–577, 586–955, and 962–1005; these read SKTD…KQRV, VDGR…EQRS, and VKQE…HKPQ. Positions 1068–1081 match the PxVxL motif motif; the sequence is NKGAKPVVVLKKLS. 2 disordered regions span residues 1088–1229 and 1724–1747; these read MISN…EPKL and TEKA…KDVE. The segment covering 1090–1100 has biased composition (low complexity); sequence SNSRSSKSSRS. 2 stretches are compositionally biased toward basic and acidic residues: residues 1104–1119 and 1156–1183; these read RFRE…ERVK and KDRD…DSRR. Positions 1212–1223 are enriched in basic residues; the sequence is KLKKKEKQKKRK. HEAT repeat units lie at residues 1803 to 1841, 1879 to 1917, 1981 to 2020, 2203 to 2241, and 2349 to 2387; these read AQSF…VDPS, PQLT…EQPT, YDWF…HILK, VVIK…QDPG, and LIHP…KYTG. 2 disordered regions span residues 2516–2590 and 2728–2774; these read EVVK…DSDL and ALLG…GHRN. Residues 2519–2537 show a composition bias toward basic residues; it reads KKKKKKKKKKKQKQKRGKK. Over residues 2548 to 2563 the composition is skewed to low complexity; sequence RSSSSSSSSSSSSSDS. Positions 2762–2774 are enriched in basic and acidic residues; the sequence is RTGDSAEASGHRN.

This sequence belongs to the SCC2/Nipped-B family.

The protein localises to the nucleus. Its function is as follows. May play a structural role in chromatin. Involved in sister chromatid cohesion, possibly by facilitating the cohesin complex loading. Transcription factor, which may promote cortical neuron migration during brain development by regulating the transcription of crucial genes in this process. The polypeptide is Nipped-B-like protein B (nipblb) (Danio rerio (Zebrafish)).